Consider the following 310-residue polypeptide: MAGAAPTTAFGQAVIGPPGSGKTTYCLGMSEFLRALGRRVAVVNLDPANEGLPYECAVDVGELVGLGDVMDALRLGPNGGLLYCMEYLEANLDWLRAKLEPLRGHYFLFDCPGQVELCTHHTSLRSIFSQMAQWDLRLTAVHLVDSHYCTDPAKFISVLCTSLATMLHVELPHVNLLSKMDLIEHYGKLAFNLDYYTEVLDLSYLLDHLASDPFFSHYRQLNEKLVQLIEDYSLVSFIPLNIQDKDSIQRVLQAVDKANGYCFGVQEQRSLEALMSAAVGADFHFSSTLGIQEKYLASSDQTAEQEAMQL.

An N-acetylalanine modification is found at alanine 2. Position 19–24 (19–24 (GSGKTT)) interacts with GTP. The short motif at 76 to 78 (GPN) is the Gly-Pro-Asn (GPN)-loop; involved in dimer interface element. 178 to 181 (SKMD) serves as a coordination point for GTP.

The protein belongs to the GPN-loop GTPase family. Heterodimers with GPN1 or GPN3. Binds to RNA polymerase II (RNAPII).

Functionally, small GTPase required for proper localization of RNA polymerase II and III (RNAPII and RNAPIII). May act at an RNAP assembly step prior to nuclear import. This is GPN-loop GTPase 2 from Rattus norvegicus (Rat).